Here is a 97-residue protein sequence, read N- to C-terminus: Co-chaperonin GroES (97 aa).

It belongs to the GroES chaperonin family. Heptamer of 7 subunits arranged in a ring. Interacts with the chaperonin GroEL.

The protein resides in the cytoplasm. Functionally, together with the chaperonin GroEL, plays an essential role in assisting protein folding. The GroEL-GroES system forms a nano-cage that allows encapsulation of the non-native substrate proteins and provides a physical environment optimized to promote and accelerate protein folding. GroES binds to the apical surface of the GroEL ring, thereby capping the opening of the GroEL channel. This is Co-chaperonin GroES from Stenotrophomonas maltophilia (Pseudomonas maltophilia).